The chain runs to 421 residues: MDLETKVKKMGLGHEQGFGAPCLKCKEKCEGFELHFWRKICRNCKCGQEEHDVLLSNEEDRKVGKLFEDTKYTTLIAKLKSDGIPMYKRNVMILTNPVAAKKNVSINTVTYEWAPPVQNQALARQYMQMLPKEKQPVAGSEGAQYRKKQLAKQLPAHDQDPSKCHELSPKEVKEMQQFVKKYKNEALGVGDVKLPCEMDARGPNPMYIPGGDRSTAAAVGAMENKTAERKKTQYSCYCCKMSMKEGDPAIYAERAGYDKLWHPACFVCSTCYELLVDMIYFWKDEKLYCGRHYCDSEKPRCAGCDELIFSNEYTQAENQNWHLKHFCCFDCDYILAGEIYVMVNDKPVCKPCYVKNHAVVCQGCHNAIDPEVQRVTYNNFSWHASTECFLCSCCSKCLIGQKFMPVEGMVFCSVECKKMMS.

The PET domain occupies 92–199; it reads MILTNPVAAK…GDVKLPCEMD (108 aa). The segment at 133 to 164 is disordered; the sequence is EKQPVAGSEGAQYRKKQLAKQLPAHDQDPSKC. Over residues 155-164 the composition is skewed to basic and acidic residues; sequence PAHDQDPSKC. LIM zinc-binding domains follow at residues 234–297, 299–359, and 362–421; these read YSCY…CDSE, PRCA…NHAV, and QGCH…KMMS.

It belongs to the prickle / espinas / testin family. Interacts via LIM domain 1 with ZYX. Interacts (via LIM domain 3) with ENAH and VASP. Interacts with ALKBH4, talin, actin, alpha-actinin, GRIP1 and PXN. Interacts (via LIM domain 2) with ACTL7A (via N-terminus). Heterodimer with ACTL7A; the heterodimer interacts with ENAH to form a heterotrimer.

The protein resides in the cytoplasm. Its subcellular location is the cell junction. The protein localises to the focal adhesion. Scaffold protein that may play a role in cell adhesion, cell spreading and in the reorganization of the actin cytoskeleton. Plays a role in the regulation of cell proliferation. May act as a tumor suppressor. This is Testin (TES) from Microcebus murinus (Gray mouse lemur).